A 168-amino-acid polypeptide reads, in one-letter code: Transcriptional repressor NrdR (168 aa).

A zinc finger spans residues 3–34 (CPFCQDAENKVIDSRESHEGSVIRRRRECLTC). Positions 49 to 139 (PLIVKKDGRR…VYRSFRDIAE (91 aa)) constitute an ATP-cone domain.

This sequence belongs to the NrdR family. Zn(2+) serves as cofactor.

Functionally, negatively regulates transcription of bacterial ribonucleotide reductase nrd genes and operons by binding to NrdR-boxes. In Myxococcus xanthus (strain DK1622), this protein is Transcriptional repressor NrdR.